We begin with the raw amino-acid sequence, 33 residues long: Photosystem II reaction center protein T (33 aa).

A helical membrane pass occupies residues 3 to 23; that stretch reads ALVYTFLLVSTLGIIFFAIFF.

The protein belongs to the PsbT family. As to quaternary structure, PSII is composed of 1 copy each of membrane proteins PsbA, PsbB, PsbC, PsbD, PsbE, PsbF, PsbH, PsbI, PsbJ, PsbK, PsbL, PsbM, PsbT, PsbY, PsbZ, Psb30/Ycf12, at least 3 peripheral proteins of the oxygen-evolving complex and a large number of cofactors. It forms dimeric complexes.

Its subcellular location is the plastid. It localises to the chloroplast thylakoid membrane. Found at the monomer-monomer interface of the photosystem II (PS II) dimer, plays a role in assembly and dimerization of PSII. PSII is a light-driven water plastoquinone oxidoreductase, using light energy to abstract electrons from H(2)O, generating a proton gradient subsequently used for ATP formation. The polypeptide is Photosystem II reaction center protein T (Helianthus annuus (Common sunflower)).